Reading from the N-terminus, the 103-residue chain is Large ribosomal subunit protein uL23 (103 aa).

This sequence belongs to the universal ribosomal protein uL23 family. In terms of assembly, part of the 50S ribosomal subunit. Contacts protein L29, and trigger factor when it is bound to the ribosome.

In terms of biological role, one of the early assembly proteins it binds 23S rRNA. One of the proteins that surrounds the polypeptide exit tunnel on the outside of the ribosome. Forms the main docking site for trigger factor binding to the ribosome. The protein is Large ribosomal subunit protein uL23 of Pelodictyon phaeoclathratiforme (strain DSM 5477 / BU-1).